A 106-amino-acid polypeptide reads, in one-letter code: Large ribosomal subunit protein uL24 (106 aa).

Basic and acidic residues predominate over residues 84 to 97; it reads EKIGRELGAKEKAR. The interval 84–106 is disordered; sequence EKIGRELGAKEKARLQKRKAAAK.

The protein belongs to the universal ribosomal protein uL24 family. In terms of assembly, part of the 50S ribosomal subunit.

Functionally, one of two assembly initiator proteins, it binds directly to the 5'-end of the 23S rRNA, where it nucleates assembly of the 50S subunit. In terms of biological role, one of the proteins that surrounds the polypeptide exit tunnel on the outside of the subunit. This Anaeromyxobacter sp. (strain K) protein is Large ribosomal subunit protein uL24.